Here is a 334-residue protein sequence, read N- to C-terminus: Glucosyltransferase 3 (334 aa).

UDP contacts are provided by residues threonine 16, arginine 179, and 249–254 (SHKSAT).

Belongs to the Gtf3 glucosyltransferase family. In terms of assembly, homotetramer; a dimer of dimers.

It participates in protein modification; protein glycosylation. Its function is as follows. Required for polymorphic O-glycosylation of the serine-rich repeat protein in this bacteria. Catalyzes the second step in glycosylation by transferring glucose from UDP-glucose to the terminal GlcNAc moiety of the 3-O-(N-acetyl-alpha-D-glucosaminyl)-L-seryl-[protein] resulting from the first glycosylation step. In terms of biological role, part of the accessory SecA2/SecY2 system specifically required to export GspB, a serine-rich repeat cell wall protein encoded upstream in the same operon. In Streptococcus gordonii, this protein is Glucosyltransferase 3.